Consider the following 229-residue polypeptide: Large ribosomal subunit protein uL1 (229 aa).

Belongs to the universal ribosomal protein uL1 family. As to quaternary structure, part of the 50S ribosomal subunit.

Binds directly to 23S rRNA. The L1 stalk is quite mobile in the ribosome, and is involved in E site tRNA release. In terms of biological role, protein L1 is also a translational repressor protein, it controls the translation of the L11 operon by binding to its mRNA. The sequence is that of Large ribosomal subunit protein uL1 from Lacticaseibacillus casei (strain BL23) (Lactobacillus casei).